Consider the following 264-residue polypeptide: Thymidylate synthase (264 aa).

Arg21 lines the dUMP pocket. His51 serves as a coordination point for (6R)-5,10-methylene-5,6,7,8-tetrahydrofolate. 126 to 127 (RR) provides a ligand contact to dUMP. The active-site Nucleophile is Cys146. Residues 166 to 169 (RSAD), Asn177, and 207 to 209 (HLY) each bind dUMP. Asp169 is a binding site for (6R)-5,10-methylene-5,6,7,8-tetrahydrofolate. Ala263 serves as a coordination point for (6R)-5,10-methylene-5,6,7,8-tetrahydrofolate.

It belongs to the thymidylate synthase family. Bacterial-type ThyA subfamily. In terms of assembly, homodimer.

Its subcellular location is the cytoplasm. The catalysed reaction is dUMP + (6R)-5,10-methylene-5,6,7,8-tetrahydrofolate = 7,8-dihydrofolate + dTMP. Its pathway is pyrimidine metabolism; dTTP biosynthesis. Catalyzes the reductive methylation of 2'-deoxyuridine-5'-monophosphate (dUMP) to 2'-deoxythymidine-5'-monophosphate (dTMP) while utilizing 5,10-methylenetetrahydrofolate (mTHF) as the methyl donor and reductant in the reaction, yielding dihydrofolate (DHF) as a by-product. This enzymatic reaction provides an intracellular de novo source of dTMP, an essential precursor for DNA biosynthesis. This Chelativorans sp. (strain BNC1) protein is Thymidylate synthase.